A 130-amino-acid polypeptide reads, in one-letter code: Sulfurtransferase TusD (130 aa).

The active-site Cysteine persulfide intermediate is the C80.

The protein belongs to the DsrE/TusD family. As to quaternary structure, heterohexamer, formed by a dimer of trimers. The hexameric TusBCD complex contains 2 copies each of TusB, TusC and TusD. The TusBCD complex interacts with TusE.

Its subcellular location is the cytoplasm. Functionally, part of a sulfur-relay system required for 2-thiolation of 5-methylaminomethyl-2-thiouridine (mnm(5)s(2)U) at tRNA wobble positions. Accepts sulfur from TusA and transfers it in turn to TusE. The sequence is that of Sulfurtransferase TusD from Sodalis glossinidius (strain morsitans).